Consider the following 511-residue polypeptide: ATP synthase subunit alpha (511 aa).

169–176 provides a ligand contact to ATP; sequence GDRKTGKT.

Belongs to the ATPase alpha/beta chains family. F-type ATPases have 2 components, CF(1) - the catalytic core - and CF(0) - the membrane proton channel. CF(1) has five subunits: alpha(3), beta(3), gamma(1), delta(1), epsilon(1). CF(0) has three main subunits: a(1), b(2) and c(9-12). The alpha and beta chains form an alternating ring which encloses part of the gamma chain. CF(1) is attached to CF(0) by a central stalk formed by the gamma and epsilon chains, while a peripheral stalk is formed by the delta and b chains.

The protein localises to the cell membrane. It catalyses the reaction ATP + H2O + 4 H(+)(in) = ADP + phosphate + 5 H(+)(out). Its function is as follows. Produces ATP from ADP in the presence of a proton gradient across the membrane. The alpha chain is a regulatory subunit. The polypeptide is ATP synthase subunit alpha (Latilactobacillus sakei subsp. sakei (strain 23K) (Lactobacillus sakei subsp. sakei)).